Here is a 202-residue protein sequence, read N- to C-terminus: MTSPANPSEVTRDRRNRGVAFVCAGVFVAMVGMSFAAVPLYRLFCQVTGYGGTTQRVEQYSDTILDRTINVRFDANTSGVPWEFKPKQREITLRIGETTEIAYVARNNAPTTTTGTATYNVAPALAGAYFNKIECFCFTKQSLEPGQTYEMPVQFFVDPEIVNVPELKNLKTITLSYTFYPNNQESAEGPAEGAAKTQKLGG.

At 1–14 the chain is on the cytoplasmic side; it reads MTSPANPSEVTRDR. A helical; Signal-anchor for type II membrane protein membrane pass occupies residues 15–37; the sequence is RNRGVAFVCAGVFVAMVGMSFAA. Residues 38–202 lie on the Periplasmic side of the membrane; the sequence is VPLYRLFCQV…GAAKTQKLGG (165 aa).

This sequence belongs to the COX11/CtaG family.

Its subcellular location is the cell inner membrane. In terms of biological role, exerts its effect at some terminal stage of cytochrome c oxidase synthesis, probably by being involved in the insertion of the copper B into subunit I. The protein is Cytochrome c oxidase assembly protein CtaG of Chelativorans sp. (strain BNC1).